The following is a 462-amino-acid chain: Integrator complex subunit 12 (462 aa).

A disordered region spans residues 42–132 (GIDSSYRPSQ…PETQSSPITV (91 aa)). Residues 59 to 86 (ISSTKNISIKQEPKISSSLPSGNNNGKV) are compositionally biased toward polar residues. A Glycyl lysine isopeptide (Lys-Gly) (interchain with G-Cter in SUMO2) cross-link involves residue lysine 68. Residues 88–124 (TTEKVKKEAEKRPADKMKSDITEGVDIPKKPRLEKPE) show a composition bias toward basic and acidic residues. Serine 128 bears the Phosphoserine mark. The PHD-type zinc finger occupies 159-215 (GLACVVCRQMMVASGNQLVECQECHNLYHRDCHKPQVTDKEANDPRLVWYCARCTRQ). A Glycyl lysine isopeptide (Lys-Gly) (interchain with G-Cter in SUMO2) cross-link involves residue lysine 254. Over residues 301–328 (SSAGPSTAKLSSTTQNNTGKPATSSANQ) the composition is skewed to polar residues. The disordered stretch occupies residues 301–462 (SSAGPSTAKL…KKAAQKKLKK (162 aa)). 2 stretches are compositionally biased toward low complexity: residues 347-358 (KIGSNNSTTPTV) and 382-437 (VSKV…GPTS). Over residues 449–462 (QMVKKKAAQKKLKK) the composition is skewed to basic residues.

It belongs to the Integrator subunit 12 family. In terms of assembly, component of the Integrator complex, composed of core subunits INTS1, INTS2, INTS3, INTS4, INTS5, INTS6, INTS7, INTS8, INTS9/RC74, INTS10, INTS11/CPSF3L, INTS12, INTS13, INTS14 and INTS15. The core complex associates with protein phosphatase 2A subunits PPP2CA and PPP2R1A, to form the Integrator-PP2A (INTAC) complex. In terms of processing, dephosphorylated at Ser-128 by the PNUTS-PP1 complex, promoting RNA polymerase II transcription pause-release.

The protein localises to the nucleus. Component of the integrator complex, a multiprotein complex that terminates RNA polymerase II (Pol II) transcription in the promoter-proximal region of genes. The integrator complex provides a quality checkpoint during transcription elongation by driving premature transcription termination of transcripts that are unfavorably configured for transcriptional elongation: the complex terminates transcription by (1) catalyzing dephosphorylation of the C-terminal domain (CTD) of Pol II subunit POLR2A/RPB1 and SUPT5H/SPT5, (2) degrading the exiting nascent RNA transcript via endonuclease activity and (3) promoting the release of Pol II from bound DNA. The integrator complex is also involved in terminating the synthesis of non-coding Pol II transcripts, such as enhancer RNAs (eRNAs), small nuclear RNAs (snRNAs), telomerase RNAs and long non-coding RNAs (lncRNAs). Mediates recruitment of cytoplasmic dynein to the nuclear envelope, probably as component of the integrator complex. The sequence is that of Integrator complex subunit 12 (INTS12) from Pongo abelii (Sumatran orangutan).